Here is a 329-residue protein sequence, read N- to C-terminus: D-lactate dehydrogenase (329 aa).

NAD(+) is bound by residues 154–155, D174, 205–206, N211, 232–234, and D258; these read KI, CP, and TSR. The active site involves R234. Residue E263 is part of the active site. H295 acts as the Proton donor in catalysis.

This sequence belongs to the D-isomer specific 2-hydroxyacid dehydrogenase family.

The enzyme catalyses (R)-lactate + NAD(+) = pyruvate + NADH + H(+). Functionally, fermentative lactate dehydrogenase. In Escherichia coli (strain K12), this protein is D-lactate dehydrogenase (ldhA).